Here is a 130-residue protein sequence, read N- to C-terminus: Small ribosomal subunit protein uS9 (130 aa).

It belongs to the universal ribosomal protein uS9 family.

The protein is Small ribosomal subunit protein uS9 of Blochmanniella floridana.